Consider the following 178-residue polypeptide: Ribosome maturation factor RimM (178 aa).

Residues 95-174 enclose the PRC barrel domain; the sequence is EGQHFWFNVI…IVHVKDAKDI (80 aa).

The protein belongs to the RimM family. Binds ribosomal protein uS19.

It is found in the cytoplasm. An accessory protein needed during the final step in the assembly of 30S ribosomal subunit, possibly for assembly of the head region. Essential for efficient processing of 16S rRNA. May be needed both before and after RbfA during the maturation of 16S rRNA. It has affinity for free ribosomal 30S subunits but not for 70S ribosomes. This Sulfurovum sp. (strain NBC37-1) protein is Ribosome maturation factor RimM.